The primary structure comprises 95 residues: Large ribosomal subunit protein uL23 (95 aa).

It belongs to the universal ribosomal protein uL23 family. Part of the 50S ribosomal subunit. Contacts protein L29, and trigger factor when it is bound to the ribosome.

In terms of biological role, one of the early assembly proteins it binds 23S rRNA. One of the proteins that surrounds the polypeptide exit tunnel on the outside of the ribosome. Forms the main docking site for trigger factor binding to the ribosome. This Deinococcus deserti (strain DSM 17065 / CIP 109153 / LMG 22923 / VCD115) protein is Large ribosomal subunit protein uL23.